We begin with the raw amino-acid sequence, 347 residues long: Selenide, water dikinase (347 aa).

Residue cysteine 17 is part of the active site. Residues lysine 20 and 48 to 50 (TRD) contribute to the ATP site. Mg(2+) is bound at residue aspartate 51. Residues aspartate 68, aspartate 91, and 139–141 (GHS) contribute to the ATP site. Aspartate 91 contacts Mg(2+). Aspartate 227 is a binding site for Mg(2+).

The protein belongs to the selenophosphate synthase 1 family. Class I subfamily. Homodimer. It depends on Mg(2+) as a cofactor.

It carries out the reaction hydrogenselenide + ATP + H2O = selenophosphate + AMP + phosphate + 2 H(+). Functionally, synthesizes selenophosphate from selenide and ATP. This is Selenide, water dikinase from Shigella flexneri serotype 5b (strain 8401).